A 187-amino-acid polypeptide reads, in one-letter code: Probable cobalt-precorrin-6B C(15)-methyltransferase (decarboxylating) (187 aa).

Residues Thr-17, 41–45 (GCGTG), Asp-62, and Gly-91 contribute to the S-adenosyl-L-methionine site.

Belongs to the methyltransferase superfamily. Archaeal-type CbiT family.

The catalysed reaction is Co-precorrin-6B + S-adenosyl-L-methionine = Co-precorrin-7 + S-adenosyl-L-homocysteine + CO2. The protein operates within cofactor biosynthesis; adenosylcobalamin biosynthesis; cob(II)yrinate a,c-diamide from sirohydrochlorin (anaerobic route): step 8/10. Its function is as follows. Catalyzes the methylation of C-15 in cobalt-precorrin-6B followed by the decarboxylation of C-12 to form cobalt-precorrin-7. This chain is Probable cobalt-precorrin-6B C(15)-methyltransferase (decarboxylating), found in Methanobrevibacter smithii (strain ATCC 35061 / DSM 861 / OCM 144 / PS).